The following is a 220-amino-acid chain: MIQVSKVIPQGAGLAPVLVKRASTVELDWDVRQKSRFDATDSLGRTLGVFLPRGTLVRGGDVLVAEDGSMIKVIASPQPVLRITACSAHGSPFDLTRAAYHLGNRHVPIELKPDHLKIEPDHVLADMLRAMHLIVHEVEEAFEPEGGAYSAGGHGHGHDHGSHEHSAHDHGKHDHAPAKPATAATPAAHVHGPDCNHGHDHAHEAKPATIQIHKRRPDNL.

The interval 145 to 220 (EGGAYSAGGH…QIHKRRPDNL (76 aa)) is disordered. The span at 156 to 177 (HGHDHGSHEHSAHDHGKHDHAP) shows a compositional bias: basic and acidic residues. Over residues 178 to 188 (AKPATAATPAA) the composition is skewed to low complexity. Residues 191–206 (HGPDCNHGHDHAHEAK) show a composition bias toward basic and acidic residues.

Belongs to the UreE family.

The protein localises to the cytoplasm. Functionally, involved in urease metallocenter assembly. Binds nickel. Probably functions as a nickel donor during metallocenter assembly. This Polaromonas sp. (strain JS666 / ATCC BAA-500) protein is Urease accessory protein UreE.